Consider the following 122-residue polypeptide: Small ribosomal subunit protein bS6 (122 aa).

Belongs to the bacterial ribosomal protein bS6 family.

In terms of biological role, binds together with bS18 to 16S ribosomal RNA. This chain is Small ribosomal subunit protein bS6, found in Methylibium petroleiphilum (strain ATCC BAA-1232 / LMG 22953 / PM1).